The sequence spans 2873 residues: Fibrillin-1 (2873 aa).

An N-terminal signal peptide occupies residues Met-1–Gly-24. The propeptide occupies Ala-25–Arg-44. A fibrillin unique N-terminal (FUN) domain region spans residues Arg-45 to Ile-81. Residues Arg-45 to Thr-452 are N-terminal domain. Disulfide bonds link Cys-59–Cys-68, Cys-67–Cys-80, Cys-85–Cys-94, Cys-89–Cys-100, Cys-102–Cys-111, Cys-119–Cys-129, Cys-123–Cys-134, Cys-136–Cys-145, Cys-150–Cys-160, Cys-154–Cys-166, and Cys-168–Cys-177. 3 EGF-like domains span residues Ile-81–Gly-112, Ser-115–Gly-146, and Gln-147–Glu-178. An interaction with MFAP4 region spans residues Cys-119 to Val-329. The TB 1 domain maps to Gly-184–Ile-236. The interval Cys-195–Cys-221 is hybrid domain 1. In terms of domain architecture, EGF-like 4; calcium-binding spans Asp-246–Glu-287. Intrachain disulfides connect Cys-250–Cys-262, Cys-257–Cys-271, Cys-273–Cys-286, Cys-292–Cys-304, Cys-299–Cys-313, and Cys-315–Cys-328. O-linked (Glc) serine glycosylation occurs at Ser-268. Residues Asp-288–Val-329 form the EGF-like 5; calcium-binding domain. The region spanning Gly-334–Cys-389 is the TB 2 domain. Residue Asn-450 is glycosylated (N-linked (GlcNAc...) asparagine). The EGF-like 6 domain occupies Val-451–Ile-491. Cystine bridges form between Cys-455–Cys-467, Cys-462–Cys-476, Cys-478–Cys-490, Cys-496–Cys-506, Cys-501–Cys-515, Cys-517–Cys-530, Cys-536–Cys-548, Cys-543–Cys-557, Cys-559–Cys-572, Cys-578–Cys-589, Cys-584–Cys-598, Cys-600–Cys-613, Cys-619–Cys-630, Cys-625–Cys-639, and Cys-641–Cys-654. Residue Ser-473 is glycosylated (O-linked (Glc) serine). The EGF-like 7; calcium-binding domain maps to Asp-492–Arg-531. The O-linked (Glc) serine glycan is linked to Ser-512. Residues Asp-532–Glu-573 form the EGF-like 8; calcium-binding domain. In terms of domain architecture, EGF-like 9; calcium-binding spans Asp-574–Lys-614. Positions Asp-615–Val-655 constitute an EGF-like 10; calcium-binding domain. The 53-residue stretch at Ser-661–Cys-713 folds into the TB 3 domain. Positions Asp-725–Val-766 constitute an EGF-like 11; calcium-binding domain. 16 disulfides stabilise this stretch: Cys-729/Cys-741, Cys-736/Cys-750, Cys-752/Cys-765, Cys-771/Cys-783, Cys-778/Cys-792, Cys-794/Cys-807, Cys-813/Cys-823, Cys-818/Cys-832, Cys-834/Cys-847, Cys-855/Cys-877, Cys-864/Cys-889, Cys-878/Cys-892, Cys-898/Cys-910, Cys-916/Cys-928, Cys-923/Cys-937, and Cys-939/Cys-952. Residues Asp-767–Glu-808 form the EGF-like 12; calcium-binding domain. The 40-residue stretch at Asp-809–Ile-848 folds into the EGF-like 13; calcium-binding domain. A TB 4 domain is found at Gly-853–Arg-904. Residues Gly-862–Ser-887 are hybrid domain 2. Positions Asp-912–Leu-953 constitute an EGF-like 14; calcium-binding domain. A TB 5 domain is found at Glu-958–Cys-1010. Residues Asp-1030–Thr-1071 form the EGF-like 15; calcium-binding domain. 46 disulfide bridges follow: Cys-1034/Cys-1046, Cys-1041/Cys-1055, Cys-1057/Cys-1070, Cys-1076/Cys-1088, Cys-1083/Cys-1097, Cys-1099/Cys-1113, Cys-1119/Cys-1131, Cys-1126/Cys-1140, Cys-1142/Cys-1155, Cys-1161/Cys-1173, Cys-1168/Cys-1182, Cys-1184/Cys-1197, Cys-1203/Cys-1214, Cys-1210/Cys-1223, Cys-1225/Cys-1238, Cys-1244/Cys-1256, Cys-1251/Cys-1265, Cys-1267/Cys-1280, Cys-1286/Cys-1298, Cys-1293/Cys-1307, Cys-1309/Cys-1322, Cys-1328/Cys-1341, Cys-1335/Cys-1350, Cys-1352/Cys-1363, Cys-1369/Cys-1382, Cys-1376/Cys-1391, Cys-1393/Cys-1404, Cys-1410/Cys-1422, Cys-1417/Cys-1431, Cys-1433/Cys-1446, Cys-1452/Cys-1463, Cys-1458/Cys-1472, Cys-1474/Cys-1487, Cys-1493/Cys-1504, Cys-1499/Cys-1513, Cys-1515/Cys-1528, Cys-1536/Cys-1564, Cys-1551/Cys-1576, Cys-1565/Cys-1579, Cys-1566/Cys-1591, Cys-1612/Cys-1624, Cys-1619/Cys-1633, Cys-1635/Cys-1648, Cys-1654/Cys-1665, Cys-1660/Cys-1674, and Cys-1676/Cys-1689. N-linked (GlcNAc...) asparagine glycosylation is present at Asn-1069. An EGF-like 16; calcium-binding domain is found at Asp-1072–Met-1114. Positions Asp-1115–Ile-1156 constitute an EGF-like 17; calcium-binding domain. Ser-1137 is a glycosylation site (O-linked (Glc) serine). A glycan (N-linked (GlcNAc...) asparagine) is linked at Asn-1151. Residues Asp-1157 to Val-1198 enclose the EGF-like 18; calcium-binding domain. The region spanning Asp-1199 to Thr-1239 is the EGF-like 19; calcium-binding domain. Residue Ser-1220 is glycosylated (O-linked (Glc) serine). One can recognise an EGF-like 20; calcium-binding domain in the interval Asp-1240–Val-1281. Positions Asp-1282–Thr-1323 constitute an EGF-like 21; calcium-binding domain. O-linked (Glc) serine glycosylation is present at Ser-1304. The region spanning Asp-1324–Thr-1364 is the EGF-like 22; calcium-binding domain. Ser-1347 carries an O-linked (Glc) serine glycan. In terms of domain architecture, EGF-like 23; calcium-binding spans Asp-1365–Thr-1405. Residue Asn-1371 is glycosylated (N-linked (GlcNAc...) asparagine). The O-linked (Glc) serine glycan is linked to Ser-1388. Residues Asp-1406–Glu-1447 enclose the EGF-like 24; calcium-binding domain. The EGF-like 25; calcium-binding domain maps to Asp-1448–Thr-1488. An N-linked (GlcNAc...) asparagine glycan is attached at Asn-1486. The region spanning Asp-1489 to Val-1529 is the EGF-like 26; calcium-binding domain. A glycan (O-linked (Glc) serine) is linked at Ser-1510. A C-terminal domain region spans residues Asp-1530 to Arg-2733. One can recognise a TB 6 domain in the interval Gly-1534 to Cys-1591. A Cell attachment site motif is present at residues Arg-1543–Asp-1545. N-linked (GlcNAc...) asparagine glycosylation occurs at Asn-1583. Positions Asp-1608–Asp-1649 constitute an EGF-like 27; calcium-binding domain. An O-linked (Glc) serine glycan is attached at Ser-1630. One can recognise an EGF-like 28; calcium-binding domain in the interval Asp-1650–Met-1690. Asn-1671 carries an N-linked (GlcNAc...) asparagine glycan. Positions Ser-1695–Cys-1750 constitute a TB 7 domain. Residues Asn-1705 and Asn-1715 are each glycosylated (N-linked (GlcNAc...) asparagine). Residues Asp-1768–Glu-1809 form the EGF-like 29; calcium-binding domain. Cystine bridges form between Cys-1772/Cys-1784, Cys-1779/Cys-1793, Cys-1795/Cys-1808, Cys-1814/Cys-1826, Cys-1820/Cys-1835, Cys-1837/Cys-1849, Cys-1855/Cys-1867, Cys-1862/Cys-1876, Cys-1878/Cys-1891, Cys-1897/Cys-1907, Cys-1902/Cys-1916, Cys-1918/Cys-1930, Cys-1936/Cys-1949, Cys-1944/Cys-1958, Cys-1960/Cys-1973, Cys-1979/Cys-1991, Cys-1986/Cys-2000, Cys-2002/Cys-2013, Cys-2019/Cys-2031, Cys-2026/Cys-2040, Cys-2042/Cys-2055, Cys-2063/Cys-2085, Cys-2072/Cys-2098, Cys-2086/Cys-2101, Cys-2087/Cys-2113, Cys-2133/Cys-2144, Cys-2139/Cys-2153, Cys-2155/Cys-2166, Cys-2172/Cys-2183, Cys-2178/Cys-2192, Cys-2194/Cys-2206, Cys-2212/Cys-2223, Cys-2219/Cys-2232, Cys-2234/Cys-2247, Cys-2253/Cys-2267, Cys-2260/Cys-2276, Cys-2278/Cys-2291, Cys-2297/Cys-2309, Cys-2304/Cys-2318, and Cys-2320/Cys-2333. Residues Asp-1810–Asn-1850 form the EGF-like 30; calcium-binding domain. The O-linked (Glc) serine glycan is linked to Ser-1832. An EGF-like 31; calcium-binding domain is found at Asp-1851 to Leu-1892. Residue Ser-1873 is glycosylated (O-linked (Glc) serine). In terms of domain architecture, EGF-like 32; calcium-binding spans Asp-1893 to Ile-1931. Asn-1904 is a glycosylation site (N-linked (GlcNAc...) asparagine). O-linked (Glc) serine glycosylation is present at Ser-1913. Positions Asp-1932 to Val-1974 constitute an EGF-like 33; calcium-binding domain. A glycan (O-linked (Glc) serine) is linked at Ser-1955. Positions Asp-1975–Glu-2014 constitute an EGF-like 34; calcium-binding domain. The region spanning Asp-2015 to Gln-2056 is the EGF-like 35; calcium-binding domain. O-linked (Glc) serine glycosylation occurs at Ser-2037. The 53-residue stretch at Ser-2061–Cys-2113 folds into the TB 8 domain. A glycan (N-linked (GlcNAc...) asparagine) is linked at Asn-2079. The region spanning Asp-2129–Val-2167 is the EGF-like 36; calcium-binding domain. O-linked (Glc) serine glycosylation is present at Ser-2150. Residues Asp-2168–Glu-2207 enclose the EGF-like 37; calcium-binding domain. Residue Asn-2180 is glycosylated (N-linked (GlcNAc...) asparagine). The EGF-like 38; calcium-binding domain occupies Asp-2208–Lys-2248. A glycan (O-linked (Glc) serine) is linked at Ser-2229. Residues Asp-2249 to Ile-2292 form the EGF-like 39; calcium-binding domain. Positions Asp-2293–Leu-2334 constitute an EGF-like 40; calcium-binding domain. O-linked (Glc) serine glycosylation is present at Ser-2315. Positions Gly-2339–Cys-2392 constitute a TB 9 domain. Residues Asp-2404 to Val-2445 enclose the EGF-like 41; calcium-binding domain. Cystine bridges form between Cys-2408–Cys-2420, Cys-2415–Cys-2429, Cys-2431–Cys-2444, Cys-2450–Cys-2461, Cys-2457–Cys-2470, Cys-2472–Cys-2485, Cys-2491–Cys-2502, Cys-2498–Cys-2511, Cys-2513–Cys-2524, Cys-2530–Cys-2543, Cys-2537–Cys-2552, Cys-2554–Cys-2567, Cys-2573–Cys-2583, Cys-2579–Cys-2592, Cys-2594–Cys-2607, Cys-2613–Cys-2624, Cys-2619–Cys-2633, Cys-2635–Cys-2648, Cys-2654–Cys-2665, Cys-2661–Cys-2674, and Cys-2676–Cys-2688. Positions Asp-2446 to Lys-2486 constitute an EGF-like 42; calcium-binding domain. The O-linked (Glc) serine glycan is linked to Ser-2467. Residues Asp-2487–Ile-2525 form the EGF-like 43; calcium-binding domain. The EGF-like 44; calcium-binding domain occupies Asp-2526 to Glu-2568. An O-linked (Glc) serine glycan is attached at Ser-2549. Positions Asp-2569–Val-2608 constitute an EGF-like 45; calcium-binding domain. An EGF-like 46; calcium-binding domain is found at Asp-2609 to Gln-2649. Ser-2630 carries O-linked (Glc) serine glycosylation. One can recognise an EGF-like 47; calcium-binding domain in the interval Asp-2650–Val-2689. Ser-2704, Ser-2705, and Ser-2711 each carry phosphoserine. The segment at Arg-2728–Ser-2747 is disordered. N-linked (GlcNAc...) asparagine glycosylation is found at Asn-2736, Asn-2752, and Asn-2769.

It belongs to the fibrillin family. As to quaternary structure, interacts with COL16A1. Interacts with integrin alpha-V/beta-3. Interacts with ADAMTS10; this interaction promotes microfibril assembly. Interacts with THSD4; this interaction promotes fibril formation. Interacts (via N-terminal domain) with FBLN2 and FBLN5. Interacts with ELN. Forms a ternary complex with ELN and FBLN2 or FBLN5 and a significant interaction with ELN seen only in the presence of FBLN2 or FBLN5. Interacts (via N-terminal domain) with LTBP2 (via C-terminal domain) in a Ca(+2)-dependent manner. Interacts (via N-terminal domain) with LTBP1 (via C-terminal domain). Interacts with integrins ITGA5:ITGB1, ITGAV:ITGB3 and ITGAV:ITGB6. Interacts (via N-terminal domain) with BMP2, BMP4, BMP7, BMP10 and GDF5. Interacts (via N-terminal domain) with MFAP2 and MFAP5. Interacts with ADAMTSL5. Interacts with MFAP4. Interacts (via N-terminal domain) with TNFSF11 in a Ca(+2)-dependent manner. Interacts (via N-terminal domain) with EFEMP2; this interaction inhibits EFEMP2 binding to LOX and ELN. Post-translationally, cleavage of N- and C-terminus by furin is required for incorporation into the extracellular matrix and assembly into microfibrils. The C-terminus, which corresponds to the Asprosin chain, was initially thought to constitute a propeptide. Fibrillin-1 and Asprosin chains are still linked together during the secretion from cells, but are subsequently separated by furin, an essential step for incorporation of Fibrillin-1 into the nascent microfibrils. In terms of processing, forms intermolecular disulfide bonds either with other fibrillin-1 molecules or with other components of the microfibrils. O-glycosylated on serine residues by POGLUT2 and POGLUT3 which is necessary for efficient protein secretion. As to expression, strongly expressed during the first week of osteoblast differentiation. In terms of tissue distribution, secreted by white adipose tissue (at protein level).

The protein localises to the secreted. It localises to the extracellular space. It is found in the extracellular matrix. Functionally, structural component of the 10-12 nm diameter microfibrils of the extracellular matrix, which conveys both structural and regulatory properties to load-bearing connective tissues. Fibrillin-1-containing microfibrils provide long-term force bearing structural support. In tissues such as the lung, blood vessels and skin, microfibrils form the periphery of the elastic fiber, acting as a scaffold for the deposition of elastin. In addition, microfibrils can occur as elastin-independent networks in tissues such as the ciliary zonule, tendon, cornea and glomerulus where they provide tensile strength and have anchoring roles. Fibrillin-1 also plays a key role in tissue homeostasis through specific interactions with growth factors, such as the bone morphogenetic proteins (BMPs), growth and differentiation factors (GDFs) and latent transforming growth factor-beta-binding proteins (LTBPs), cell-surface integrins and other extracellular matrix protein and proteoglycan components. Regulates osteoblast maturation by controlling TGF-beta bioavailability and calibrating TGF-beta and BMP levels, respectively. Negatively regulates osteoclastogenesis by binding and sequestering an osteoclast differentiation and activation factor TNFSF11. This leads to disruption of TNFSF11-induced Ca(2+) signaling and impairment of TNFSF11-mediated nuclear translocation and activation of transcription factor NFATC1 which regulates genes important for osteoclast differentiation and function. Mediates cell adhesion via its binding to cell surface receptors integrins ITGAV:ITGB3 and ITGA5:ITGB1. Binds heparin and this interaction plays an important role in the assembly of microfibrils. Adipokine secreted by white adipose tissue that plays an important regulatory role in the glucose metabolism of liver, muscle and pancreas. Hormone that targets the liver in response to fasting to increase plasma glucose levels. Binds the olfactory receptor Olfr734 at the surface of hepatocytes and promotes hepatocyte glucose release by activating the protein kinase A activity in the liver, resulting in rapid glucose release into the circulation. May act as a regulator of adaptive thermogenesis by inhibiting browning and energy consumption, while increasing lipid deposition in white adipose tissue. Also acts as an orexigenic hormone that increases appetite: crosses the blood brain barrier and exerts effects on the hypothalamus. In the arcuate nucleus of the hypothalamus, asprosin directly activates orexigenic AgRP neurons and indirectly inhibits anorexigenic POMC neurons, resulting in appetite stimulation. Activates orexigenic AgRP neurons via binding to the olfactory receptor Olfr734. May also play a role in sperm motility in testis via interaction with Olfr734 receptor. This is Fibrillin-1 from Mus musculus (Mouse).